Consider the following 323-residue polypeptide: Elongation factor P--(R)-beta-lysine ligase (323 aa).

76 to 78 (SPE) provides a ligand contact to substrate. Residues 100–102 (RNE) and Asn109 contribute to the ATP site. Substrate is bound at residue Tyr118. 242 to 243 (EL) serves as a coordination point for ATP. Substrate is bound at residue Glu249. Gly298 provides a ligand contact to ATP.

The protein belongs to the class-II aminoacyl-tRNA synthetase family. EpmA subfamily. Homodimer.

It carries out the reaction D-beta-lysine + L-lysyl-[protein] + ATP = N(6)-((3R)-3,6-diaminohexanoyl)-L-lysyl-[protein] + AMP + diphosphate + H(+). With EpmB is involved in the beta-lysylation step of the post-translational modification of translation elongation factor P (EF-P). Catalyzes the ATP-dependent activation of (R)-beta-lysine produced by EpmB, forming a lysyl-adenylate, from which the beta-lysyl moiety is then transferred to the epsilon-amino group of a conserved specific lysine residue in EF-P. The polypeptide is Elongation factor P--(R)-beta-lysine ligase (Pasteurella multocida (strain Pm70)).